We begin with the raw amino-acid sequence, 331 residues long: Ketol-acid reductoisomerase (NADP(+)) (331 aa).

The KARI N-terminal Rossmann domain maps to 2–181 (LEKYYDKDAD…GATRAVVFET (180 aa)). NADP(+) contacts are provided by residues 25–28 (YGSQ), Arg-48, Ser-52, and 82–85 (DEQQ). His-107 is an active-site residue. Gly-133 is a binding site for NADP(+). The 146-residue stretch at 182–327 (SFREETETDL…KEIRATMPQF (146 aa)) folds into the KARI C-terminal knotted domain. The Mg(2+) site is built by Asp-190, Glu-194, Glu-226, and Glu-230. Ser-251 is a substrate binding site.

It belongs to the ketol-acid reductoisomerase family. The cofactor is Mg(2+).

The catalysed reaction is (2R)-2,3-dihydroxy-3-methylbutanoate + NADP(+) = (2S)-2-acetolactate + NADPH + H(+). It carries out the reaction (2R,3R)-2,3-dihydroxy-3-methylpentanoate + NADP(+) = (S)-2-ethyl-2-hydroxy-3-oxobutanoate + NADPH + H(+). Its pathway is amino-acid biosynthesis; L-isoleucine biosynthesis; L-isoleucine from 2-oxobutanoate: step 2/4. It participates in amino-acid biosynthesis; L-valine biosynthesis; L-valine from pyruvate: step 2/4. Involved in the biosynthesis of branched-chain amino acids (BCAA). Catalyzes an alkyl-migration followed by a ketol-acid reduction of (S)-2-acetolactate (S2AL) to yield (R)-2,3-dihydroxy-isovalerate. In the isomerase reaction, S2AL is rearranged via a Mg-dependent methyl migration to produce 3-hydroxy-3-methyl-2-ketobutyrate (HMKB). In the reductase reaction, this 2-ketoacid undergoes a metal-dependent reduction by NADPH to yield (R)-2,3-dihydroxy-isovalerate. In Methanospirillum hungatei JF-1 (strain ATCC 27890 / DSM 864 / NBRC 100397 / JF-1), this protein is Ketol-acid reductoisomerase (NADP(+)).